A 479-amino-acid polypeptide reads, in one-letter code: Probable glycine dehydrogenase (decarboxylating) subunit 2 (479 aa).

Lys265 is modified (N6-(pyridoxal phosphate)lysine).

The protein belongs to the GcvP family. C-terminal subunit subfamily. As to quaternary structure, the glycine cleavage system is composed of four proteins: P, T, L and H. In this organism, the P 'protein' is a heterodimer of two subunits. The cofactor is pyridoxal 5'-phosphate.

The enzyme catalyses N(6)-[(R)-lipoyl]-L-lysyl-[glycine-cleavage complex H protein] + glycine + H(+) = N(6)-[(R)-S(8)-aminomethyldihydrolipoyl]-L-lysyl-[glycine-cleavage complex H protein] + CO2. The glycine cleavage system catalyzes the degradation of glycine. The P protein binds the alpha-amino group of glycine through its pyridoxal phosphate cofactor; CO(2) is released and the remaining methylamine moiety is then transferred to the lipoamide cofactor of the H protein. The chain is Probable glycine dehydrogenase (decarboxylating) subunit 2 from Pseudothermotoga lettingae (strain ATCC BAA-301 / DSM 14385 / NBRC 107922 / TMO) (Thermotoga lettingae).